A 221-amino-acid polypeptide reads, in one-letter code: Growth hormone-releasing peptides (221 aa).

The first 25 residues, 1-25, serve as a signal peptide directing secretion; sequence MHLKIGTLTIRTIMLFTLCTFLTLF. Positions 26 to 95 are excised as a propeptide; that stretch reads AFSTCFDETK…QPENEFLQER (70 aa). Phenylalanine 107 bears the Phenylalanine amide mark. The propeptide occupies 110-127; the sequence is TSDDKIAKSIPSFDKIAK. Residues phenylalanine 136, phenylalanine 156, and phenylalanine 176 each carry the phenylalanine amide modification. A propeptide spanning residues 179–221 is cleaved from the precursor; it reads TPHSDRLQYEMNSHPLELKNPEEDSDRKKRQAMTFRIRTDLQM.

Belongs to the FARP (FMRFamide related peptide) family. As to expression, observed in the suprachiasmatic nucleus and in several telencephalic and diencephalic regions.

The protein resides in the secreted. Primary role is to release GH from the pituitary. May act as an endogenous ligand in the bullfrog hypothalamo-hypophysial system. This Aquarana catesbeiana (American bullfrog) protein is Growth hormone-releasing peptides.